We begin with the raw amino-acid sequence, 242 residues long: Galectin-3 (242 aa).

Residues 1-35 are disordered; sequence MADGFSLNDALSGSGHPPNQGWPGPWGNQPAGPGG. Alanine 2 is modified (N-acetylalanine). The residue at position 6 (serine 6) is a Phosphoserine; by CK1. The residue at position 12 (serine 12) is a Phosphoserine. Residues 17–31 show a composition bias toward low complexity; it reads PPNQGWPGPWGNQPA. Repeat copies occupy residues 35-43, 44-52, 53-61, and 62-70. The 7 X 9 AA tandem repeats of Y-P-G-X(3)-P-[GS]-A stretch occupies residues 35–98; the sequence is GYPGAAYPGA…GAGAYPGASP (64 aa). The segment at 55 to 93 is disordered; sequence GQAPPGPYPGPGAHGAYPGQPGGPGAYPSPGQPSGAGAY. The 5; approximate repeat unit spans residues 71–80; sequence YPGQPGGPGA. A compositionally biased stretch (low complexity) spans 80-93; it reads AYPSPGQPSGAGAY. Residues 81-92 form a 6; approximate repeat; it reads YPSPGQPSGAGA. The stretch at 93-98 is one 7; truncated repeat; it reads YPGASP. The Galectin domain maps to 110–240; it reads YDLPLPGGVM…DIQLTSASHA (131 aa). 173–181 is an a beta-D-galactoside binding site; that stretch reads WGREERQTT. Positions 218–233 match the Nuclear export signal motif; it reads RNLKEINKLGISGDIQ.

Probably forms homo- or heterodimers. Interacts with DMBT1. Interacts with CD6 and ALCAM. Forms a complex with the ITGA3, ITGB1 and CSPG4. Interacts with LGALS3BP, LYPD3, ZFTRAF1 and UACA. Interacts with TRIM16; this interaction mediates autophagy of damage endomembranes. Interacts with cargo receptor TMED10; the interaction mediates the translocation from the cytoplasm into the ERGIC (endoplasmic reticulum-Golgi intermediate compartment) and thereby secretion. Interacts with and inhibits by binding NCR3/NKp30.

The protein localises to the cytoplasm. The protein resides in the nucleus. It localises to the secreted. In terms of biological role, galactose-specific lectin which binds IgE. May mediate with the alpha-3, beta-1 integrin the stimulation by CSPG4 of endothelial cells migration. Together with DMBT1, required for terminal differentiation of columnar epithelial cells during early embryogenesis. In the nucleus: acts as a pre-mRNA splicing factor. Involved in acute inflammatory responses including neutrophil activation and adhesion, chemoattraction of monocytes macrophages, opsonization of apoptotic neutrophils, and activation of mast cells. Together with TRIM16, coordinates the recognition of membrane damage with mobilization of the core autophagy regulators ATG16L1 and BECN1 in response to damaged endomembranes. When secreted, interacts with NK cell-activating receptor NCR3/NKp30 acting as an inhibitory ligand which antagonizes NK cell attack. The chain is Galectin-3 (LGALS3) from Oryctolagus cuniculus (Rabbit).